The following is a 554-amino-acid chain: Cytochrome P450 monooxygenase himC (554 aa).

The chain crosses the membrane as a helical span at residues 52-72 (YSVASVAIAGFTALVVSVALY). 4 N-linked (GlcNAc...) asparagine glycosylation sites follow: Asn110, Asn328, Asn414, and Asn425. Cys501 is a binding site for heme.

It belongs to the cytochrome P450 family. The cofactor is heme.

The protein resides in the membrane. It participates in secondary metabolite biosynthesis. Cytochrome P450 monooxygenase; part of the him gene cluster that mediates the biosynthesis of himeic acid A, a ubiquitin-activating enzyme (E1) inhibitor. First, himA, together with the trans-enoyl reductase himH, catalyzes the formation of apolyketide chain, which is then condensed with leucine by the NRPS activity of himA. Dieckmann cyclization and release from himA gives a tetramic acid intermediate as the product of himA PKS-NRPS. HimG then catalyzes alpha-oxidation of the tetramic acid ring, with a subsequent rearrangement to yield apyrone intermediate. Two terminal methyl groups of polyketide and amide side chains are oxidized to carboxylic acids by himC cytochrome P450 monooxygenase to form himeic acid A. Himeic acid A is further converted to himeic acid B and C during culture growth. No gene responsible for pyrone to pyridone conversion was found in the him gene cluster and himeic acid A is non-enzymatically converted to himeic acid C by the incorporation of an ammonium nitrogen atom in a pH5 buffer, and to himeic acid B at a conversion ratio of 50% during incubation in MeOH for 5 days. This is Cytochrome P450 monooxygenase himC from Aspergillus japonicus.